The following is a 233-amino-acid chain: C-type lectin domain-containing protein 87 (233 aa).

The signal sequence occupies residues 1–19; the sequence is MRFCLLVAFILPGLFLVHA. An O-linked (Xyl...) (chondroitin sulfate) serine glycan is attached at Ser-31. The N-linked (GlcNAc...) asparagine glycan is linked to Asn-81. One can recognise a C-type lectin domain in the interval 93-223; sequence FADSCYWIEK…CTYMLYSICE (131 aa). 2 disulfide bridges follow: Cys-114–Cys-222 and Cys-193–Cys-214. N-linked (GlcNAc...) asparagine glycosylation occurs at Asn-225.

This chain is C-type lectin domain-containing protein 87, found in Caenorhabditis elegans.